Consider the following 287-residue polypeptide: Elongation factor Ts (287 aa).

Residues 80 to 83 form an involved in Mg(2+) ion dislocation from EF-Tu region; it reads TDFL.

This sequence belongs to the EF-Ts family.

Its subcellular location is the cytoplasm. In terms of biological role, associates with the EF-Tu.GDP complex and induces the exchange of GDP to GTP. It remains bound to the aminoacyl-tRNA.EF-Tu.GTP complex up to the GTP hydrolysis stage on the ribosome. This chain is Elongation factor Ts, found in Stutzerimonas stutzeri (strain A1501) (Pseudomonas stutzeri).